A 227-amino-acid chain; its full sequence is Small ribosomal subunit protein uS3 (227 aa).

The KH type-2 domain occupies 38–106 (LRKFIKDRFY…NVNINIQEIR (69 aa)).

The protein belongs to the universal ribosomal protein uS3 family. As to quaternary structure, part of the 30S ribosomal subunit. Forms a tight complex with proteins S10 and S14.

Functionally, binds the lower part of the 30S subunit head. Binds mRNA in the 70S ribosome, positioning it for translation. This chain is Small ribosomal subunit protein uS3, found in Syntrophomonas wolfei subsp. wolfei (strain DSM 2245B / Goettingen).